Consider the following 304-residue polypeptide: Acetylglutamate kinase (304 aa).

Residues 82–83 (GG), R104, and N197 each bind substrate.

This sequence belongs to the acetylglutamate kinase family. ArgB subfamily.

Its subcellular location is the cytoplasm. It carries out the reaction N-acetyl-L-glutamate + ATP = N-acetyl-L-glutamyl 5-phosphate + ADP. It functions in the pathway amino-acid biosynthesis; L-arginine biosynthesis; N(2)-acetyl-L-ornithine from L-glutamate: step 2/4. Catalyzes the ATP-dependent phosphorylation of N-acetyl-L-glutamate. This is Acetylglutamate kinase from Prochlorococcus marinus (strain SARG / CCMP1375 / SS120).